Reading from the N-terminus, the 853-residue chain is Envelope glycoprotein gp160 (853 aa).

The signal sequence occupies residues 1 to 32 (MRVKEKYQHLWRWGWKWGIMLLGILMICSATE). The Extracellular segment spans residues 33–682 (NLWVTVYYGV…ITNWLWYIKI (650 aa)). A disulfide bridge connects residues Cys54 and Cys74. Residues Asn88, Asn136, Asn141, Asn156, Asn160, Asn186, Asn195, Asn232, Asn239, Asn260, Asn274, Asn287, Asn293, Asn299, Asn330, and Asn354 are each glycosylated (N-linked (GlcNAc...) asparagine; by host). 5 cysteine pairs are disulfide-bonded: Cys119/Cys203, Cys126/Cys194, Cys131/Cys157, Cys216/Cys245, and Cys226/Cys237. The segment at 131 to 156 (CTDLKNDTNTNSSNGRMIMEKGEIKN) is V1. A V2 region spans residues 157–194 (CSFNISTSIRNKVQKEYAFFYKLDIRPIDNTTYRLISC). Positions 294 to 328 (CTRPNNNTRKSIRIQRGPGRAFVTIGKIGNMRQAH) are V3. A disulfide bridge links Cys294 with Cys329. The tract at residues 362–372 (SSGGDPEIVTH) is CD4-binding loop. 2 cysteine pairs are disulfide-bonded: Cys376–Cys443 and Cys383–Cys416. A V4 region spans residues 383-416 (CNSTQLFNSTWFNSTWSTEGSNNTEGSDTITLPC). Asn384, Asn390, Asn395, Asn404, Asn446, and Asn461 each carry an N-linked (GlcNAc...) asparagine; by host glycan. 2 V5 regions span residues 459–469 (NTNESEVFRPG) and 461–469 (NESEVFRPG). A fusion peptide region spans residues 510–530 (AVGIGALFLGFLGAAGSTMGA). The immunosuppression stretch occupies residues 572-590 (KQLQARILAVERYLKDQQL). A disulfide bridge links Cys596 with Cys602. Residues Asn609, Asn614, Asn623, Asn635, and Asn672 are each glycosylated (N-linked (GlcNAc...) asparagine; by host). The stretch at 631-665 (REINNYTSLIHSLIDESQNQQEKNEQELLELDKWA) forms a coiled coil. An MPER; binding to GalCer region spans residues 660 to 681 (ELDKWASLWNWFNITNWLWYIK). Residues 683–703 (FIMIVGGLVGLRIVFAVLSIV) form a helical membrane-spanning segment. The Cytoplasmic portion of the chain corresponds to 704-853 (NRVRQGYSPL…RIRQGLERIL (150 aa)). The YXXL motif; contains endocytosis signal signature appears at 710 to 713 (YSPL). Residues 717–741 (THLPNRGGPDRPEGIEEEGGERDRD) form a disordered region. Cys762 carries the S-palmitoyl cysteine; by host lipid modification.

It belongs to the HIV-1 env protein family. As to quaternary structure, the mature envelope protein (Env) consists of a homotrimer of non-covalently associated gp120-gp41 heterodimers. The resulting complex protrudes from the virus surface as a spike. There seems to be as few as 10 spikes on the average virion. Interacts with host CD4, CCR5 and CXCR4. Gp120 also interacts with the C-type lectins CD209/DC-SIGN and CLEC4M/DC-SIGNR (collectively referred to as DC-SIGN(R)). Gp120 and gp41 interact with GalCer. Gp120 interacts with host ITGA4/ITGB7 complex; on CD4+ T-cells, this interaction results in rapid activation of integrin ITGAL/LFA-1, which facilitates efficient cell-to-cell spreading of HIV-1. Gp120 interacts with cell-associated heparan sulfate; this interaction increases virus infectivity on permissive cells and may be involved in infection of CD4- cells. In terms of assembly, the mature envelope protein (Env) consists of a homotrimer of non-covalently associated gp120-gp41 heterodimers. The resulting complex protrudes from the virus surface as a spike. There seems to be as few as 10 spikes on the average virion. Highly glycosylated by host. The high number of glycan on the protein is reffered to as 'glycan shield' because it contributes to hide protein sequence from adaptive immune system. In terms of processing, palmitoylation of the transmembrane protein and of Env polyprotein (prior to its proteolytic cleavage) is essential for their association with host cell membrane lipid rafts. Palmitoylation is therefore required for envelope trafficking to classical lipid rafts, but not for viral replication. Post-translationally, specific enzymatic cleavages in vivo yield mature proteins. Envelope glycoproteins are synthesized as an inactive precursor that is heavily N-glycosylated and processed likely by host cell furin in the Golgi to yield the mature SU and TM proteins. The cleavage site between SU and TM requires the minimal sequence [KR]-X-[KR]-R. About 2 of the 9 disulfide bonds of gp41 are reduced by P4HB/PDI, following binding to CD4 receptor.

The protein localises to the virion membrane. Its subcellular location is the host cell membrane. The protein resides in the host endosome membrane. Oligomerizes in the host endoplasmic reticulum into predominantly trimers. In a second time, gp160 transits in the host Golgi, where glycosylation is completed. The precursor is then proteolytically cleaved in the trans-Golgi and thereby activated by cellular furin or furin-like proteases to produce gp120 and gp41. Functionally, attaches the virus to the host lymphoid cell by binding to the primary receptor CD4. This interaction induces a structural rearrangement creating a high affinity binding site for a chemokine coreceptor like CXCR4 and/or CCR5. Acts as a ligand for CD209/DC-SIGN and CLEC4M/DC-SIGNR, which are respectively found on dendritic cells (DCs), and on endothelial cells of liver sinusoids and lymph node sinuses. These interactions allow capture of viral particles at mucosal surfaces by these cells and subsequent transmission to permissive cells. HIV subverts the migration properties of dendritic cells to gain access to CD4+ T-cells in lymph nodes. Virus transmission to permissive T-cells occurs either in trans (without DCs infection, through viral capture and transmission), or in cis (following DCs productive infection, through the usual CD4-gp120 interaction), thereby inducing a robust infection. In trans infection, bound virions remain infectious over days and it is proposed that they are not degraded, but protected in non-lysosomal acidic organelles within the DCs close to the cell membrane thus contributing to the viral infectious potential during DCs' migration from the periphery to the lymphoid tissues. On arrival at lymphoid tissues, intact virions recycle back to DCs' cell surface allowing virus transmission to CD4+ T-cells. In terms of biological role, acts as a class I viral fusion protein. Under the current model, the protein has at least 3 conformational states: pre-fusion native state, pre-hairpin intermediate state, and post-fusion hairpin state. During fusion of viral and target intracellular membranes, the coiled coil regions (heptad repeats) assume a trimer-of-hairpins structure, positioning the fusion peptide in close proximity to the C-terminal region of the ectodomain. The formation of this structure appears to drive apposition and subsequent fusion of viral and target cell membranes. Complete fusion occurs in host cell endosomes and is dynamin-dependent, however some lipid transfer might occur at the plasma membrane. The virus undergoes clathrin-dependent internalization long before endosomal fusion, thus minimizing the surface exposure of conserved viral epitopes during fusion and reducing the efficacy of inhibitors targeting these epitopes. Membranes fusion leads to delivery of the nucleocapsid into the cytoplasm. This Human immunodeficiency virus type 1 group M subtype B (isolate MFA) (HIV-1) protein is Envelope glycoprotein gp160.